We begin with the raw amino-acid sequence, 238 residues long: Succinate dehydrogenase iron-sulfur subunit (238 aa).

The 2Fe-2S ferredoxin-type domain occupies 8 to 97 (YRYNPDVDDA…KIVIRPLPGL (90 aa)). [2Fe-2S] cluster-binding residues include C55, C60, and C75. The region spanning 139–169 (QREKLDGLYECILCACCSTSCPSFWWNPDKF) is the 4Fe-4S ferredoxin-type domain. Positions 149, 152, and 155 each coordinate [4Fe-4S] cluster. C159 lines the [3Fe-4S] cluster pocket. W164 lines the a ubiquinone pocket. Residues C206 and C212 each coordinate [3Fe-4S] cluster. C216 is a [4Fe-4S] cluster binding site.

The protein belongs to the succinate dehydrogenase/fumarate reductase iron-sulfur protein family. As to quaternary structure, part of an enzyme complex containing four subunits: a flavoprotein, an iron-sulfur, cytochrome b-556, and a hydrophobic anchor protein. The complex forms trimers. The cofactor is [2Fe-2S] cluster. Requires [3Fe-4S] cluster as cofactor. [4Fe-4S] cluster serves as cofactor.

It is found in the cell inner membrane. It catalyses the reaction a quinone + succinate = fumarate + a quinol. The protein operates within carbohydrate metabolism; tricarboxylic acid cycle; fumarate from succinate (bacterial route): step 1/1. In terms of biological role, two distinct, membrane-bound, FAD-containing enzymes are responsible for the catalysis of fumarate and succinate interconversion; the fumarate reductase is used in anaerobic growth, and the succinate dehydrogenase is used in aerobic growth. This is Succinate dehydrogenase iron-sulfur subunit (sdhB) from Escherichia coli (strain K12).